We begin with the raw amino-acid sequence, 507 residues long: Probable aldehyde dehydrogenase (507 aa).

219–225 (GFGVEAG) contributes to the NAD(+) binding site. Catalysis depends on residues Glu-263 and Cys-302.

Belongs to the aldehyde dehydrogenase family.

It carries out the reaction an aldehyde + NAD(+) + H2O = a carboxylate + NADH + 2 H(+). The chain is Probable aldehyde dehydrogenase from Streptomyces coelicolor (strain ATCC BAA-471 / A3(2) / M145).